Reading from the N-terminus, the 518-residue chain is Nicotine N-demethylase CYP82E3 (518 aa).

A helical membrane pass occupies residues V2 to W22. A Glycyl lysine isopeptide (Lys-Gly) (interchain with G-Cter in ubiquitin) cross-link involves residue K254. C458 contributes to the heme binding site.

This sequence belongs to the cytochrome P450 family. CYP82E2 subfamily. Heme serves as cofactor. As to expression, expressed in leaves.

The protein resides in the membrane. It catalyses the reaction (S)-nicotine + reduced [NADPH--hemoprotein reductase] + O2 = (S)-nornicotine + formaldehyde + oxidized [NADPH--hemoprotein reductase] + H2O + H(+). The protein operates within alkaloid biosynthesis; nicotine biosynthesis. Its function is as follows. Involved in the biosynthesis of pyridine alkaloid natural products, leading mainly to the production of anabasine, anatabine, nicotine and nornicotine, effective deterrents against herbivores with antiparasitic and pesticide properties (neurotoxins); nornicotine serves as the precursor in the synthesis of the carcinogen compound N'-nitrosonornicotine (NNN). Catalyzes the demethylation of nicotine to form nornicotine. The polypeptide is Nicotine N-demethylase CYP82E3 (Nicotiana tomentosiformis (Tobacco)).